Here is a 182-residue protein sequence, read N- to C-terminus: Allergen Bla g 4 (182 aa).

A signal peptide spans 1-12 (AVLALCATDTLA). Residue Asn72 is glycosylated (N-linked (GlcNAc...) asparagine).

This sequence belongs to the calycin superfamily. Triabin family.

The protein localises to the secreted. Functionally, probable ligand-binding protein. This chain is Allergen Bla g 4, found in Blattella germanica (German cockroach).